The sequence spans 302 residues: 5'-3' exonuclease (302 aa).

Positions 173 to 269 constitute a 5'-3' exonuclease domain; sequence IPKLIPDLLG…NITTKKIKML (97 aa).

In terms of biological role, 5'-3' exonuclease acting preferentially on double-stranded DNA. The polypeptide is 5'-3' exonuclease (pol) (Buchnera aphidicola subsp. Baizongia pistaciae (strain Bp)).